We begin with the raw amino-acid sequence, 98 residues long: Citrate lyase acyl carrier protein (98 aa).

Position 14 is an O-(phosphoribosyl dephospho-coenzyme A)serine (Ser14).

This sequence belongs to the CitD family. As to quaternary structure, oligomer with a subunit composition of (alpha,beta,gamma)6.

It localises to the cytoplasm. Its function is as follows. Covalent carrier of the coenzyme of citrate lyase. This Albidiferax ferrireducens (strain ATCC BAA-621 / DSM 15236 / T118) (Rhodoferax ferrireducens) protein is Citrate lyase acyl carrier protein.